The chain runs to 322 residues: Dirigent protein 9 (322 aa).

Positions 1-20 (MAKALHITIFLFLISSNLLA) are cleaved as a signal peptide.

The protein belongs to the plant dirigent protein family. In terms of assembly, homodimer.

It localises to the secreted. The protein resides in the extracellular space. The protein localises to the apoplast. Functionally, dirigent proteins impart stereoselectivity on the phenoxy radical-coupling reaction, yielding optically active lignans from two molecules of coniferyl alcohol in the biosynthesis of lignans, flavonolignans, and alkaloids and thus plays a central role in plant secondary metabolism. The chain is Dirigent protein 9 (DIR9) from Arabidopsis thaliana (Mouse-ear cress).